Reading from the N-terminus, the 597-residue chain is Coronatine-insensitive protein homolog 1b (597 aa).

The 43-residue stretch at 22-64 (SIPEEALHLVLGYVDDPRDREAVSLVCRRWHRIDALTRKHVTV) folds into the F-box domain. Jasmonate is bound by residues R92, R353, Y391, R414, and R501.

Interacts with TIFY10C/JAZ8 in a coronatine-dependent manner. Interacts with TIFY3/JAZ1, TIFY6A/JAZ3, TIFY6B/JAZ4, TIFY10A/JAZ6, TIFY10B/JAZ7, TIFY11A/JAZ9, TIFY11B/JAZ10, TIFY11C/JAZ11 and TIFY11D/JAZ12 in a coronatine-dependent manner. In terms of tissue distribution, expressed in roots, shoots, leaf sheaths and leaf blades.

In terms of biological role, involved in jasmonate (JA) signaling. Required for jasmonate signaling in plant defense responses. Can complement Arabidopsis coi1-1 mutant and restore jasmonate signaling. Component of SCF(COI1) E3 ubiquitin ligase complexes, which may mediate the ubiquitination and subsequent proteasomal degradation of target proteins, including TIFY/JAZ family. In Oryza sativa subsp. japonica (Rice), this protein is Coronatine-insensitive protein homolog 1b.